The chain runs to 371 residues: Queuine tRNA-ribosyltransferase (371 aa).

Aspartate 92 functions as the Proton acceptor in the catalytic mechanism. Residues 92-96, aspartate 147, glutamine 190, and glycine 217 each bind substrate; that span reads DSGGF. An RNA binding region spans residues 248 to 254; the sequence is GVGKPID. Catalysis depends on aspartate 267, which acts as the Nucleophile. The interval 272–276 is RNA binding; important for wobble base 34 recognition; it reads TRSGR.

Belongs to the queuine tRNA-ribosyltransferase family. In terms of assembly, homodimer. Within each dimer, one monomer is responsible for RNA recognition and catalysis, while the other monomer binds to the replacement base PreQ1.

The catalysed reaction is 7-aminomethyl-7-carbaguanine + guanosine(34) in tRNA = 7-aminomethyl-7-carbaguanosine(34) in tRNA + guanine. Its pathway is tRNA modification; tRNA-queuosine biosynthesis. Its function is as follows. Catalyzes the base-exchange of a guanine (G) residue with the queuine precursor 7-aminomethyl-7-deazaguanine (PreQ1) at position 34 (anticodon wobble position) in tRNAs with GU(N) anticodons (tRNA-Asp, -Asn, -His and -Tyr). Catalysis occurs through a double-displacement mechanism. The nucleophile active site attacks the C1' of nucleotide 34 to detach the guanine base from the RNA, forming a covalent enzyme-RNA intermediate. The proton acceptor active site deprotonates the incoming PreQ1, allowing a nucleophilic attack on the C1' of the ribose to form the product. After dissociation, two additional enzymatic reactions on the tRNA convert PreQ1 to queuine (Q), resulting in the hypermodified nucleoside queuosine (7-(((4,5-cis-dihydroxy-2-cyclopenten-1-yl)amino)methyl)-7-deazaguanosine). The sequence is that of Queuine tRNA-ribosyltransferase from Caulobacter vibrioides (strain ATCC 19089 / CIP 103742 / CB 15) (Caulobacter crescentus).